Here is a 1498-residue protein sequence, read N- to C-terminus: Mitogen-activated protein kinase kinase kinase nsy-1 (1498 aa).

Disordered regions lie at residues 1-35 (MSQN…PTAY) and 190-209 (LQSY…FART). Residues 22–33 (LPLPPRGAPPPT) are compositionally biased toward pro residues. The region spanning 664–925 (SNERVVLGKG…AKDLLQDPFI (262 aa)) is the Protein kinase domain. ATP-binding positions include 670–678 (LGKGTYGTV) and Lys693. Asp790 serves as the catalytic Proton acceptor. A disordered region spans residues 1022-1050 (IDHARNRTFSSSSPVPDGQSSAGTNMSHP). Low complexity predominate over residues 1031-1042 (SSSSPVPDGQSS). Residues 1276–1314 (SREERVREDRKELRTLQEENEILIERLLQVERELNAQLK) are a coiled coil. Positions 1461 to 1498 (QPVFLSPMRSRDDSLDDYHSSSADDMYTGAAAETSSGN) are disordered. Over residues 1469 to 1479 (RSRDDSLDDYH) the composition is skewed to basic and acidic residues.

The protein belongs to the protein kinase superfamily. STE Ser/Thr protein kinase family. MAP kinase kinase kinase subfamily. In terms of assembly, interacts with unc-43. Interacts with sek-1. The cofactor is Mg(2+). May be phosphorylated upon pathogenic bacterial infection. May be regulated by proteasomal degradation mediated by the E3-ubiquitin ligase rle-1. In terms of tissue distribution, expressed in intestine, hypodermis, rectal gland cell and neurons including sensory AWC neurons.

It localises to the cell projection. The protein resides in the axon. The protein localises to the perikaryon. The catalysed reaction is L-seryl-[protein] + ATP = O-phospho-L-seryl-[protein] + ADP + H(+). It catalyses the reaction L-threonyl-[protein] + ATP = O-phospho-L-threonyl-[protein] + ADP + H(+). Functionally, serine/threonine-protein kinase which, by phosphorylating and activating sek-1, plays an important role in the activation of the p38 pathway also composed of the downstream effectors sek-1 and pmk-1. Downstream of CaMKII unc-43 and adapter protein tir-1, plays a role in determining asymmetric cell fates in olfactory AWC neurons during neuronal development. Activation results in the repression of odorant receptor str-2 expression in one of the 2 AWC neurons. Involved in resistance to pathogenic Gram-positive and Gram-negative bacterial and fungal infection. Involved in resistance to the nematotoxic C.cinerea galectin Cgl2. Probably by activating the sek1/pmk-1/skn-1 pathway, involved in the up-regulation of gcs-1 and glutathione-S-transferase gst-4 expression upon bacterial infection. Probably downstream of tir-1 and nipi-3, required for the expression of antimicrobial peptide nlp-29 in the epidermis in response to fungal infection or physical injury. Plays a role in resistance to several environmental stresses including oxidative, protein misfolding (ER) and osmotic stresses, and DNA-damaging reagents. Plays a role in the stabilization of transcription factor rnt-1 in the intestine during oxidative stress. Involved in germline apoptosis induced by heavy metals, such as Cu(2+). In addition, plays a role in the up-regulation of gcs-1 upon arsenite treatment, most likely through activation of pmk-1, to confer protection against toxicity induced by heavy metals. Plays a role downstream of tir-1 in regulating susceptibility to anoxia. Involved in egg laying. This is Mitogen-activated protein kinase kinase kinase nsy-1 from Caenorhabditis elegans.